We begin with the raw amino-acid sequence, 272 residues long: UPF0759 protein YecE (272 aa).

The protein belongs to the UPF0759 family.

The protein is UPF0759 protein YecE (yecE) of Escherichia coli O157:H7.